Here is a 964-residue protein sequence, read N- to C-terminus: Phosphoenolpyruvate carboxylase (964 aa).

Position 11 is a phosphoserine (serine 11). Catalysis depends on residues histidine 172 and lysine 600.

Belongs to the PEPCase type 1 family. Homotetramer. It depends on Mg(2+) as a cofactor.

It localises to the cytoplasm. The catalysed reaction is oxaloacetate + phosphate = phosphoenolpyruvate + hydrogencarbonate. The protein operates within photosynthesis; C4 acid pathway. Its activity is regulated as follows. By light-reversible phosphorylation. In terms of biological role, through the carboxylation of phosphoenolpyruvate (PEP) it forms oxaloacetate, a four-carbon dicarboxylic acid source for the tricarboxylic acid cycle. The protein is Phosphoenolpyruvate carboxylase (PPC) of Nicotiana tabacum (Common tobacco).